The chain runs to 389 residues: Chalcone synthase 1 (389 aa).

Residue Cys-164 is part of the active site.

The protein belongs to the thiolase-like superfamily. Chalcone/stilbene synthases family.

It carries out the reaction (E)-4-coumaroyl-CoA + 3 malonyl-CoA + 3 H(+) = 2',4,4',6'-tetrahydroxychalcone + 3 CO2 + 4 CoA. The protein operates within secondary metabolite biosynthesis; flavonoid biosynthesis. In terms of biological role, the primary product of this enzyme is 4,2',4',6'-tetrahydroxychalcone (also termed naringenin-chalcone or chalcone) which can under specific conditions spontaneously isomerize into naringenin. The polypeptide is Chalcone synthase 1 (CHS1) (Cicer arietinum (Chickpea)).